A 205-amino-acid chain; its full sequence is Glycerol-3-phosphate acyltransferase (205 aa).

Transmembrane regions (helical) follow at residues 4–24, 56–76, 81–101, 112–132, and 138–158; these read IAPG…AILV, VAVL…AYAL, FWLG…VFFG, FGAI…TWLL, and GYSS…VWWF.

This sequence belongs to the PlsY family. Probably interacts with PlsX.

It is found in the cell inner membrane. It catalyses the reaction an acyl phosphate + sn-glycerol 3-phosphate = a 1-acyl-sn-glycero-3-phosphate + phosphate. Its pathway is lipid metabolism; phospholipid metabolism. Catalyzes the transfer of an acyl group from acyl-phosphate (acyl-PO(4)) to glycerol-3-phosphate (G3P) to form lysophosphatidic acid (LPA). This enzyme utilizes acyl-phosphate as fatty acyl donor, but not acyl-CoA or acyl-ACP. The chain is Glycerol-3-phosphate acyltransferase from Citrobacter koseri (strain ATCC BAA-895 / CDC 4225-83 / SGSC4696).